The chain runs to 88 residues: Small ribosomal subunit protein bS16 (88 aa).

The protein belongs to the bacterial ribosomal protein bS16 family.

This is Small ribosomal subunit protein bS16 from Anaeromyxobacter sp. (strain Fw109-5).